The following is a 370-amino-acid chain: Leucine-rich repeat and transmembrane domain-containing protein 2 (370 aa).

The N-terminal stretch at 1-35 is a signal peptide; the sequence is MLAPGSSPGQRGRLALQWRQVSWITCWIALYAVEA. The region spanning 36–68 is the LRRNT domain; it reads LPTCPFSCKCDSRSLEVDCSGLGLTTVPPDVPA. Residues 36 to 310 are Extracellular-facing; it reads LPTCPFSCKC…PASVRRAMGT (275 aa). LRR repeat units lie at residues 69–90, 93–114, 117–139, 141–162, and 165–186; these read ATRTLLLLNNKLSALPSWAFAN, SLQRLDLSNNFLDRLPRSIFGD, NLTELQLRNNSIRTLDRDLLRHS, LLRHLDLSINGLAQLPPGLFDG, and ALRSLSLRSNRLQNLDRLTFEP. Residue asparagine 90 is glycosylated (N-linked (GlcNAc...) asparagine). N-linked (GlcNAc...) asparagine glycans are attached at residues asparagine 117 and asparagine 125. The LRRCT domain occupies 198-252; it reads NPWECDCNLREFKHWMEWFSYRGGRLDQLACTLPKELRGKDMRMVPMEMFNYCSQ. A glycan (N-linked (GlcNAc...) asparagine) is linked at asparagine 257. The tract at residues 261-300 is disordered; the sequence is GLDIPGPPCTKASPEPAKPKPGAEPEPEPSTACPQKQRHR. A helical transmembrane segment spans residues 311 to 331; sequence VIIAGVVCGVVCIMMVVAAAY. Residues 332–370 are Cytoplasmic-facing; the sequence is GCIYASLMAKYHRELKKRQPLMGDPEGEHEDQKQISSVA. The tract at residues 351–370 is disordered; the sequence is PLMGDPEGEHEDQKQISSVA.

Its subcellular location is the membrane. The protein is Leucine-rich repeat and transmembrane domain-containing protein 2 (LRTM2) of Homo sapiens (Human).